The sequence spans 219 residues: Octanoyltransferase (219 aa).

Residues 31–206 (DEDVDQIWLV…ELVELLGYDQ (176 aa)) enclose the BPL/LPL catalytic domain. Residues 70 to 77 (RGGQVTYH), 137 to 139 (SLG), and 150 to 152 (GLA) each bind substrate. The active-site Acyl-thioester intermediate is the Cys-168.

This sequence belongs to the LipB family.

It is found in the cytoplasm. It catalyses the reaction octanoyl-[ACP] + L-lysyl-[protein] = N(6)-octanoyl-L-lysyl-[protein] + holo-[ACP] + H(+). It functions in the pathway protein modification; protein lipoylation via endogenous pathway; protein N(6)-(lipoyl)lysine from octanoyl-[acyl-carrier-protein]: step 1/2. Functionally, catalyzes the transfer of endogenously produced octanoic acid from octanoyl-acyl-carrier-protein onto the lipoyl domains of lipoate-dependent enzymes. Lipoyl-ACP can also act as a substrate although octanoyl-ACP is likely to be the physiological substrate. This chain is Octanoyltransferase, found in Vibrio atlanticus (strain LGP32) (Vibrio splendidus (strain Mel32)).